Consider the following 333-residue polypeptide: MNPTFILAALCLGIASATLTFNHSLEAQWTKWKAMHNRLYGMNEEGWRRAVWEKNMKMIELHNQEYSQGKHSFTMAMNTFGDMTSEEFRQVMNGFQNRKPRKGKVFQEPLFYEAPRSVDWREKGYVTPVKNQGQCGSCWAFSATGALEGQMFRKTGKLVSLSEQNLVDCSGPQGNEGCNGGLMDYAFQYVADNGGLDSEESYPYEATEESCKYNPEYSVANDTGFVDIPKQEKALMKAVATVGPISVAIDAGHESFMFYKEGIYFEPDCSSEDMDHGVLVVGYGFESTESDNSKYWLVKNSWGEEWGMGGYIKMAKDRRNHCGIASAASYPTV.

Residues 1-17 form the signal peptide; it reads MNPTFILAALCLGIASA. Positions 18–113 are cleaved as a propeptide — activation peptide; sequence TLTFNHSLEA…KVFQEPLFYE (96 aa). E122 serves as a coordination point for Zn(2+). 2 cysteine pairs are disulfide-bonded: C135–C178 and C169–C211. The active site involves C138. Zn(2+) contacts are provided by E163, D184, E199, E205, E209, D227, D250, H253, D273, and D275. C269 and C322 are oxidised to a cystine. H276 is an active-site residue. Residues 289–291 constitute a propeptide that is removed on maturation; sequence ESD. The active site involves N300.

Belongs to the peptidase C1 family. As to quaternary structure, dimer of a heavy and a light chain linked by disulfide bonds. Interacts with Long isoform of CD74/Ii chain; the interaction stabilizes the conformation of mature CTSL. In terms of processing, during export along the endocytic pathway, pro-CTSL undergoes several proteolytic cleavages to generate the CTSL single-chain and two-chain mature forms, composed of a heavy chain linked to a light chain by disulfide bonds. Autocleavage; produces the single-chain CTSL after cleavage of the propeptide. The cleavage can be intermolecular.

The protein resides in the lysosome. It is found in the apical cell membrane. It localises to the cytoplasmic vesicle. The protein localises to the secretory vesicle. Its subcellular location is the chromaffin granule. The protein resides in the secreted. It is found in the extracellular space. The enzyme catalyses Specificity close to that of papain. As compared to cathepsin B, cathepsin L exhibits higher activity toward protein substrates, but has little activity on Z-Arg-Arg-NHMec, and no peptidyl-dipeptidase activity.. With respect to regulation, inhibited by the propeptide produced by autocleavage. Long isoform of CD74/Ii chain stabilizes the conformation of mature CTSL by binding to its active site and serving as a chaperone to help maintain a pool of mature enzyme in endocytic compartments and extracellular space of APCs. IFNG enhances the conversion into the CTSL mature and active form. Inhibited by CST6. Inhibited by the glycopeptide antibiotic teicoplanin. Inhibited by amantadine. Its function is as follows. Thiol protease important for the overall degradation of proteins in lysosomes. Plays a critical for normal cellular functions such as general protein turnover, antigen processing and bone remodeling. Involved in the solubilization of cross-linked TG/thyroglobulin and in the subsequent release of thyroid hormone thyroxine (T4) by limited proteolysis of TG/thyroglobulin in the thyroid follicle lumen. In neuroendocrine chromaffin cells secretory vesicles, catalyzes the prohormone proenkephalin processing to the active enkephalin peptide neurotransmitter. In thymus, regulates CD4(+) T cell positive selection by generating the major histocompatibility complex class II (MHCII) bound peptide ligands presented by cortical thymic epithelial cells. Also mediates invariant chain processing in cortical thymic epithelial cells. Major elastin-degrading enzyme at neutral pH. Accumulates as a mature and active enzyme in the extracellular space of antigen presenting cells (APCs) to regulate degradation of the extracellular matrix in the course of inflammation. Secreted form generates endostatin from COL18A1. Critical for cardiac morphology and function. Plays an important role in hair follicle morphogenesis and cycling, as well as epidermal differentiation. Required for maximal stimulation of steroidogenesis by TIMP1. The protein is Procathepsin L (CTSL) of Chlorocebus aethiops (Green monkey).